The following is a 336-amino-acid chain: NADH-quinone oxidoreductase subunit H (336 aa).

Helical transmembrane passes span 17-37 (WFII…TYAI), 85-105 (ALFT…LAVM), 116-136 (LGIG…GVIT), 154-174 (AAQM…IVLL), 190-210 (VWNI…AQAE), 247-267 (VYMF…WLPI), 274-294 (IPGI…QFWI), and 309-329 (FAWK…AVVV).

It belongs to the complex I subunit 1 family. As to quaternary structure, NDH-1 is composed of 14 different subunits. Subunits NuoA, H, J, K, L, M, N constitute the membrane sector of the complex.

It is found in the cell membrane. It carries out the reaction a quinone + NADH + 5 H(+)(in) = a quinol + NAD(+) + 4 H(+)(out). Its function is as follows. NDH-1 shuttles electrons from NADH, via FMN and iron-sulfur (Fe-S) centers, to quinones in the respiratory chain. The immediate electron acceptor for the enzyme in this species is believed to be ubiquinone. Couples the redox reaction to proton translocation (for every two electrons transferred, four hydrogen ions are translocated across the cytoplasmic membrane), and thus conserves the redox energy in a proton gradient. This subunit may bind ubiquinone. The sequence is that of NADH-quinone oxidoreductase subunit H from Brevibacillus brevis (strain 47 / JCM 6285 / NBRC 100599).